Reading from the N-terminus, the 40-residue chain is Accessory gland-specific peptide 57Db (40 aa).

Residues 1 to 17 (MKITSALVLLFAGVAFA) form the signal peptide.

In terms of tissue distribution, lumen fluid of male accessory glands, becomes seminal fluid.

It localises to the secreted. In terms of biological role, transferred from male to female during mating and may affect egglaying and behavior after mating. This chain is Accessory gland-specific peptide 57Db (Mst57Db), found in Drosophila melanogaster (Fruit fly).